The primary structure comprises 477 residues: MSVLLVGVSHRSAPVSVLEKVAITDADRPKLIDKMLASSHISEAMIVSTCNRVEVYAVVDAFHGGLAEVGELLTRHSGLAMPDLTKHAYVRYSEAAAEHLFAVASGLDSMVVGEQQVLSQIRGAYATADAQQAVGRTLHELAQHALRVGKRVHSETGIDRAGASVVSVALDRAAQVLGDLAGRTAVVVGAGAMGGLSVAHLARAGIGRIIVVNRTIERARRLAETAASYGVESSALELDRLHEAMSAADVVLSCTGAVGAVVTLADTHRALADRDRAEFPAGDRPLVFCDLGLPRDVEPAVAGLPGVAVIDIESLQRDPAAGAAADDTAAARSIVAEELAKYLAGQRMAEVTPTVAALRQRAAEVVEAELLRLDSRLPGLAEPERDEVARTVRRVVDKLLHAPTVRVKQLASTPGGDSYAEALRELFELKPGAAQAVAAPMEITAIGPDRTAGLADDFTPGHRLDFEQHLGEEGKPA.

Residues 49-52 (TCNR), S109, 114-116 (EQQ), and Q120 contribute to the substrate site. The active-site Nucleophile is C50. 189–194 (GAGAMG) is an NADP(+) binding site.

This sequence belongs to the glutamyl-tRNA reductase family. As to quaternary structure, homodimer.

The enzyme catalyses (S)-4-amino-5-oxopentanoate + tRNA(Glu) + NADP(+) = L-glutamyl-tRNA(Glu) + NADPH + H(+). It functions in the pathway porphyrin-containing compound metabolism; protoporphyrin-IX biosynthesis; 5-aminolevulinate from L-glutamyl-tRNA(Glu): step 1/2. Functionally, catalyzes the NADPH-dependent reduction of glutamyl-tRNA(Glu) to glutamate 1-semialdehyde (GSA). In Nocardia farcinica (strain IFM 10152), this protein is Glutamyl-tRNA reductase.